The chain runs to 269 residues: Mitochondrial distribution and morphology protein 12 (269 aa).

Positions methionine 1 to valine 269 constitute an SMP-LTD domain. The segment at glutamate 72–glutamate 119 is disordered. Over residues proline 88–threonine 114 the composition is skewed to polar residues.

The protein belongs to the MDM12 family. In terms of assembly, component of the ER-mitochondria encounter structure (ERMES) or MDM complex, composed of MMM1, MDM10, MDM12 and MDM34. An MMM1 homodimer associates with one molecule of MDM12 on each side in a pairwise head-to-tail manner, and the SMP-LTD domains of MMM1 and MDM12 generate a continuous hydrophobic tunnel for phospholipid trafficking.

The protein localises to the mitochondrion outer membrane. The protein resides in the endoplasmic reticulum membrane. In terms of biological role, component of the ERMES/MDM complex, which serves as a molecular tether to connect the endoplasmic reticulum (ER) and mitochondria. Components of this complex are involved in the control of mitochondrial shape and protein biogenesis, and function in nonvesicular lipid trafficking between the ER and mitochondria. MDM12 is required for the interaction of the ER-resident membrane protein MMM1 and the outer mitochondrial membrane-resident beta-barrel protein MDM10. The MDM12-MMM1 subcomplex functions in the major beta-barrel assembly pathway that is responsible for biogenesis of all mitochondrial outer membrane beta-barrel proteins, and acts in a late step after the SAM complex. The MDM10-MDM12-MMM1 subcomplex further acts in the TOM40-specific pathway after the action of the MDM12-MMM1 complex. Essential for establishing and maintaining the structure of mitochondria and maintenance of mtDNA nucleoids. This is Mitochondrial distribution and morphology protein 12 from Komagataella phaffii (strain GS115 / ATCC 20864) (Yeast).